The following is a 474-amino-acid chain: tRNA-2-methylthio-N(6)-dimethylallyladenosine synthase (474 aa).

The MTTase N-terminal domain occupies 3-120 (KKLHIKTWGC…LPEMINHVQG (118 aa)). [4Fe-4S] cluster-binding residues include Cys12, Cys49, Cys83, Cys157, Cys161, and Cys164. The Radical SAM core domain occupies 143–375 (RAEGPTAFVS…QQRISQQAME (233 aa)). The region spanning 378–441 (RKMVGTVQRV…ASSLRGILLR (64 aa)) is the TRAM domain.

Belongs to the methylthiotransferase family. MiaB subfamily. As to quaternary structure, monomer. It depends on [4Fe-4S] cluster as a cofactor.

Its subcellular location is the cytoplasm. The enzyme catalyses N(6)-dimethylallyladenosine(37) in tRNA + (sulfur carrier)-SH + AH2 + 2 S-adenosyl-L-methionine = 2-methylsulfanyl-N(6)-dimethylallyladenosine(37) in tRNA + (sulfur carrier)-H + 5'-deoxyadenosine + L-methionine + A + S-adenosyl-L-homocysteine + 2 H(+). Functionally, catalyzes the methylthiolation of N6-(dimethylallyl)adenosine (i(6)A), leading to the formation of 2-methylthio-N6-(dimethylallyl)adenosine (ms(2)i(6)A) at position 37 in tRNAs that read codons beginning with uridine. This chain is tRNA-2-methylthio-N(6)-dimethylallyladenosine synthase, found in Yersinia pestis bv. Antiqua (strain Antiqua).